We begin with the raw amino-acid sequence, 55 residues long: Spermatid nuclear transition protein 1 (55 aa).

A compositionally biased stretch (basic residues) spans 1–42 (MSTSRKLKSQGTRRGKNRTPHKGVKRGCSKRKYRKSSLKSRK). The tract at residues 1–55 (MSTSRKLKSQGTRRGKNRTPHKGVKRGCSKRKYRKSSLKSRKRCDDANRNFRSHL) is disordered. Phosphoserine is present on residues serine 9, serine 36, serine 37, and serine 40.

Belongs to the nuclear transition protein 1 family. Testis.

The protein localises to the nucleus. The protein resides in the chromosome. Functionally, plays a key role in the replacement of histones to protamine in the elongating spermatids of mammals. In condensing spermatids, loaded onto the nucleosomes, where it promotes the recruitment and processing of protamines, which are responsible for histone eviction. This chain is Spermatid nuclear transition protein 1 (TNP1), found in Ovis aries (Sheep).